Consider the following 1119-residue polypeptide: DNA-directed RNA polymerase D subunit 2b (1119 aa).

Asp732 is a binding site for Mg(2+). Zn(2+) is bound by residues Cys1055, Cys1058, Cys1080, and Cys1083. Residues 1055–1083 (CRKCKTYANVIERTPSSGRKIRGPYCRVC) form a C4-type zinc finger.

The protein belongs to the RNA polymerase beta chain family. As to quaternary structure, component of the RNA polymerase IVa and IVb (Pol IV) complexes.

It localises to the nucleus. The catalysed reaction is RNA(n) + a ribonucleoside 5'-triphosphate = RNA(n+1) + diphosphate. Its function is as follows. DNA-dependent RNA polymerase catalyzes the transcription of DNA into RNA using the four ribonucleoside triphosphates as substrates. Second largest component of RNA polymerase IVa and IVb which mediate short-interfering RNAs (siRNA) accumulation and subsequent RNA-directed DNA methylation-dependent (RdDM) silencing of endogenous repeated sequences, including transposable largest subunit. Also required for full erasure of methylation elements. Required for intercellular RNA interference (RNAi) leading to systemic post-transcriptional gene silencing. This is DNA-directed RNA polymerase D subunit 2b (NRPD2b) from Arabidopsis thaliana (Mouse-ear cress).